A 111-amino-acid polypeptide reads, in one-letter code: Large ribosomal subunit protein uL22 (111 aa).

This sequence belongs to the universal ribosomal protein uL22 family. As to quaternary structure, part of the 50S ribosomal subunit.

Its function is as follows. This protein binds specifically to 23S rRNA; its binding is stimulated by other ribosomal proteins, e.g. L4, L17, and L20. It is important during the early stages of 50S assembly. It makes multiple contacts with different domains of the 23S rRNA in the assembled 50S subunit and ribosome. The globular domain of the protein is located near the polypeptide exit tunnel on the outside of the subunit, while an extended beta-hairpin is found that lines the wall of the exit tunnel in the center of the 70S ribosome. The chain is Large ribosomal subunit protein uL22 from Clostridium perfringens (strain ATCC 13124 / DSM 756 / JCM 1290 / NCIMB 6125 / NCTC 8237 / Type A).